Here is a 485-residue protein sequence, read N- to C-terminus: Cysteine--tRNA ligase (485 aa).

Cys-27 is a Zn(2+) binding site. The 'HIGH' region motif lies at 29-39 (ITAYDLCHIGH). Positions 208, 233, and 237 each coordinate Zn(2+). Residues 265–269 (KMSKS) carry the 'KMSKS' region motif. Residue Lys-268 coordinates ATP.

Belongs to the class-I aminoacyl-tRNA synthetase family. Monomer. Zn(2+) serves as cofactor.

The protein localises to the cytoplasm. It catalyses the reaction tRNA(Cys) + L-cysteine + ATP = L-cysteinyl-tRNA(Cys) + AMP + diphosphate. This Solidesulfovibrio magneticus (strain ATCC 700980 / DSM 13731 / RS-1) (Desulfovibrio magneticus) protein is Cysteine--tRNA ligase.